We begin with the raw amino-acid sequence, 186 residues long: Testis-expressed protein 29 (186 aa).

At 1 to 56 (MKDTKEIKRSPPHLLKKFAVCDIPLYDICDYNVTRERCRSLDCCFYRGVCYEKAVP) the chain is on the extracellular side. Residues 57 to 77 (IYVQVFFTLIWFVAGAFIIAV) traverse the membrane as a helical segment. Topologically, residues 78-151 (IYRVIQGTKK…AGCCLWMKSK (74 aa)) are cytoplasmic. Disordered stretches follow at residues 104–138 (SPTPELIPEPIPEPIPEPIPEPIREPPPPVKKTES) and 151–186 (KPAKDQPQKETAAPEPPSNPEVKKVNSGSAVPQAAP). Over residues 108–133 (ELIPEPIPEPIPEPIPEPIREPPPPV) the composition is skewed to pro residues.

It is found in the membrane. This Mus musculus (Mouse) protein is Testis-expressed protein 29 (Tex29).